Consider the following 136-residue polypeptide: MENKVTLSDLVRKNIPVILKGSKHPLTEKELLEELAKKIPELVKNGEYRNGVLRGVLNKLSTQPVDRLGISREGNRVKYYFITDKKTELQNVIRNLISEIKEKELLTVDYLNDSPETIDFIKDVSTHVKDLEGFTR.

This chain is SPbeta prophage-derived uncharacterized protein YonI (yonI), found in Bacillus subtilis (strain 168).